We begin with the raw amino-acid sequence, 150 residues long: Transcriptional repressor NrdR (150 aa).

A zinc finger lies at 3–34 (CPFCGYEDTFVIDTREIEDQKVIRRRRECPNC). Residues 49–139 (IMVIKKDGRR…VYQEFSSLEE (91 aa)) enclose the ATP-cone domain.

Belongs to the NrdR family. Requires Zn(2+) as cofactor.

Its function is as follows. Negatively regulates transcription of bacterial ribonucleotide reductase nrd genes and operons by binding to NrdR-boxes. This chain is Transcriptional repressor NrdR, found in Dictyoglomus turgidum (strain DSM 6724 / Z-1310).